An 826-amino-acid chain; its full sequence is Lon protease (826 aa).

Basic and acidic residues predominate over residues M1–N20. Residues M1–G27 form a disordered region. One can recognise a Lon N-terminal domain in the interval L33–L231. G384–T391 lines the ATP pocket. In terms of domain architecture, Lon proteolytic spans E620–E801. Catalysis depends on residues S707 and K750.

This sequence belongs to the peptidase S16 family. As to quaternary structure, homohexamer. Organized in a ring with a central cavity.

The protein resides in the cytoplasm. The catalysed reaction is Hydrolysis of proteins in presence of ATP.. In terms of biological role, ATP-dependent serine protease that mediates the selective degradation of mutant and abnormal proteins as well as certain short-lived regulatory proteins. Required for cellular homeostasis and for survival from DNA damage and developmental changes induced by stress. Degrades polypeptides processively to yield small peptide fragments that are 5 to 10 amino acids long. Binds to DNA in a double-stranded, site-specific manner. The polypeptide is Lon protease (Neorickettsia sennetsu (strain ATCC VR-367 / Miyayama) (Ehrlichia sennetsu)).